The sequence spans 430 residues: GTPase Obg (430 aa).

The Obg domain occupies 1 to 158; the sequence is MFVDQVKISL…LDVSLELKLL (158 aa). The disordered stretch occupies residues 118–145; it reads KGGRGGRGNSRFATPRNPAPDFSEKGEP. The region spanning 159-329 is the OBG-type G domain; sequence ADVGLVGFPS…LLYAIADKLE (171 aa). GTP contacts are provided by residues 165-172, 190-194, 212-215, 282-285, and 310-312; these read GFPSVGKS, FTTIK, DLPG, NKMD, and STI. The Mg(2+) site is built by serine 172 and threonine 192. An OCT domain is found at 352–430; the sequence is KHTPSQDKFT…ILGGEFEFVE (79 aa).

It belongs to the TRAFAC class OBG-HflX-like GTPase superfamily. OBG GTPase family. In terms of assembly, monomer. Mg(2+) serves as cofactor.

It is found in the cytoplasm. An essential GTPase which binds GTP, GDP and possibly (p)ppGpp with moderate affinity, with high nucleotide exchange rates and a fairly low GTP hydrolysis rate. Plays a role in control of the cell cycle, stress response, ribosome biogenesis and in those bacteria that undergo differentiation, in morphogenesis control. The polypeptide is GTPase Obg (Staphylococcus aureus (strain Mu3 / ATCC 700698)).